Reading from the N-terminus, the 83-residue chain is Mitotic-spindle organizing protein 1 (83 aa).

The protein belongs to the MOZART1 family. As to quaternary structure, part of the gamma-tubulin complex.

The protein localises to the cytoplasm. Its subcellular location is the cytoskeleton. It is found in the microtubule organizing center. The protein resides in the spindle pole body. In terms of biological role, required for gamma-tubulin complex recruitment to the microtubule organizing center (MTOC). The protein is Mitotic-spindle organizing protein 1 of Botryotinia fuckeliana (strain B05.10) (Noble rot fungus).